Here is a 414-residue protein sequence, read N- to C-terminus: Tryptophan synthase beta chain (414 aa).

Residues 1-26 are disordered; the sequence is MVSTFSRKNQNYKKDDLNQPSKDGRF. The segment covering 12-26 has biased composition (basic and acidic residues); sequence YKKDDLNQPSKDGRF. Lys109 is modified (N6-(pyridoxal phosphate)lysine).

The protein belongs to the TrpB family. In terms of assembly, tetramer of two alpha and two beta chains. Pyridoxal 5'-phosphate is required as a cofactor.

The enzyme catalyses (1S,2R)-1-C-(indol-3-yl)glycerol 3-phosphate + L-serine = D-glyceraldehyde 3-phosphate + L-tryptophan + H2O. It functions in the pathway amino-acid biosynthesis; L-tryptophan biosynthesis; L-tryptophan from chorismate: step 5/5. Functionally, the beta subunit is responsible for the synthesis of L-tryptophan from indole and L-serine. The sequence is that of Tryptophan synthase beta chain from Prochlorococcus marinus (strain MIT 9215).